A 132-amino-acid chain; its full sequence is MKSISMLTLAASVAFAVTAGQAVAAGDPAAGEKVFNKCKACHQVGETAKNAVAPELNGIDGRKSASAEGYNYSEPFKALGITWDEAQFKEFIKNPKAKVPGTKMIFPGLSSENDQANVWAYLSQFGADGKKK.

The signal sequence occupies residues 1–24 (MKSISMLTLAASVAFAVTAGQAVA). Residues 26–126 (GDPAAGEKVF…NVWAYLSQFG (101 aa)) form the Cytochrome c domain. Positions 38, 41, 42, and 104 each coordinate heme c.

Post-translationally, binds 1 heme c group covalently per subunit.

The protein localises to the periplasm. This Methylosinus trichosporium protein is Cytochrome c-554.